The primary structure comprises 952 residues: Translation initiation factor IF-2 (952 aa).

Disordered stretches follow at residues 74-95, 153-204, 230-256, and 273-319; these read QRRL…RQLK, AAQA…KEEP, MHSP…EQAD, and DEKG…DVND. Low complexity predominate over residues 153–168; the sequence is AAQADQTDQTDQTDQA. The segment covering 232–242 has biased composition (basic and acidic residues); the sequence is SPFDRSSEAER. Residues 286–303 are compositionally biased toward low complexity; the sequence is PGETNAATPAGTASTAGA. In terms of domain architecture, tr-type G spans 449–619; that stretch reads IRPPVITIMG…LAEAEIRELK (171 aa). The G1 stretch occupies residues 458–465; that stretch reads GHVDHGKT. 458 to 465 is a binding site for GTP; sequence GHVDHGKT. The G2 stretch occupies residues 483-487; sequence GITQH. A G3 region spans residues 505-508; the sequence is DTPG. Residues 505-509 and 559-562 each bind GTP; these read DTPGH and NKVD. The tract at residues 559 to 562 is G4; it reads NKVD. Residues 595 to 597 are G5; sequence SAK.

Belongs to the TRAFAC class translation factor GTPase superfamily. Classic translation factor GTPase family. IF-2 subfamily.

It is found in the cytoplasm. One of the essential components for the initiation of protein synthesis. Protects formylmethionyl-tRNA from spontaneous hydrolysis and promotes its binding to the 30S ribosomal subunits. Also involved in the hydrolysis of GTP during the formation of the 70S ribosomal complex. The sequence is that of Translation initiation factor IF-2 from Chlorobium limicola (strain DSM 245 / NBRC 103803 / 6330).